The following is a 1484-amino-acid chain: DNA-directed RNA polymerase subunit beta' (1484 aa).

The Zn(2+) site is built by cysteine 67, cysteine 69, cysteine 82, and cysteine 85. Residues aspartate 499, aspartate 501, and aspartate 503 each coordinate Mg(2+). Positions 867, 943, 950, and 953 each coordinate Zn(2+).

It belongs to the RNA polymerase beta' chain family. As to quaternary structure, the RNAP catalytic core consists of 2 alpha, 1 beta, 1 beta' and 1 omega subunit. When a sigma factor is associated with the core the holoenzyme is formed, which can initiate transcription. Mg(2+) serves as cofactor. Requires Zn(2+) as cofactor.

It carries out the reaction RNA(n) + a ribonucleoside 5'-triphosphate = RNA(n+1) + diphosphate. Functionally, DNA-dependent RNA polymerase catalyzes the transcription of DNA into RNA using the four ribonucleoside triphosphates as substrates. In Chlorobium phaeovibrioides (strain DSM 265 / 1930) (Prosthecochloris vibrioformis (strain DSM 265)), this protein is DNA-directed RNA polymerase subunit beta'.